The sequence spans 500 residues: Glycerol kinase (500 aa).

Thr-11 contributes to the ADP binding site. Residues Thr-11, Thr-12, and Ser-13 each coordinate ATP. Thr-11 contacts sn-glycerol 3-phosphate. Residue Arg-15 coordinates ADP. The sn-glycerol 3-phosphate site is built by Arg-81, Glu-82, Tyr-133, and Asp-242. Glycerol contacts are provided by Arg-81, Glu-82, Tyr-133, Asp-242, and Gln-243. Positions 264 and 307 each coordinate ADP. Residues Thr-264, Gly-307, Gln-311, and Gly-411 each coordinate ATP. ADP is bound at residue Gly-411.

It belongs to the FGGY kinase family.

The catalysed reaction is glycerol + ATP = sn-glycerol 3-phosphate + ADP + H(+). Its pathway is polyol metabolism; glycerol degradation via glycerol kinase pathway; sn-glycerol 3-phosphate from glycerol: step 1/1. With respect to regulation, inhibited by fructose 1,6-bisphosphate (FBP). Key enzyme in the regulation of glycerol uptake and metabolism. Catalyzes the phosphorylation of glycerol to yield sn-glycerol 3-phosphate. The sequence is that of Glycerol kinase from Rhodopseudomonas palustris (strain BisA53).